Here is a 290-residue protein sequence, read N- to C-terminus: Inorganic pyrophosphatase (290 aa).

Arginine 81 serves as a coordination point for diphosphate. Residues aspartate 118, aspartate 123, and aspartate 155 each coordinate Mg(2+).

Belongs to the PPase family. Mg(2+) is required as a cofactor.

It is found in the cytoplasm. It catalyses the reaction diphosphate + H2O = 2 phosphate + H(+). This is Inorganic pyrophosphatase (ipp-1) from Neurospora crassa (strain ATCC 24698 / 74-OR23-1A / CBS 708.71 / DSM 1257 / FGSC 987).